The following is a 275-amino-acid chain: U6 snRNA phosphodiesterase 1 (275 aa).

Positions 1–25 are disordered; it reads MEFLKHYEDDEDQDDENNTKDENVN. His122 acts as the Proton acceptor in catalysis. AMP contacts are provided by residues 122 to 124, Tyr206, and 208 to 214; these read HIS and NPEPHLS. Residues Tyr206 and 210–214 contribute to the UMP site; that span reads EPHLS. His212 serves as the catalytic Proton donor.

The protein belongs to the 2H phosphoesterase superfamily. USB1 family.

The protein localises to the nucleus. It catalyses the reaction a 3'-end uridylyl-uridine-RNA = a 3'-end 2',3'-cyclophospho-uridine-RNA + uridine. Its function is as follows. 3'-5' RNA exonuclease that trims the 3' end of oligo(U) tracts of the pre-U6 small nuclear RNA (snRNA) molecule, leading to the formation of a mature U6 snRNA 3' end-terminated with a 2',3'-cyclic phosphate. Participates in the U6 snRNA 3' end processing that prevents U6 snRNA degradation. This Dictyostelium discoideum (Social amoeba) protein is U6 snRNA phosphodiesterase 1.